Reading from the N-terminus, the 1404-residue chain is DNA-directed RNA polymerase subunit beta' (1404 aa).

Zn(2+) contacts are provided by Cys70, Cys72, Cys85, and Cys88. Mg(2+)-binding residues include Asp460, Asp462, and Asp464. The Zn(2+) site is built by Cys814, Cys888, Cys895, and Cys898.

This sequence belongs to the RNA polymerase beta' chain family. The RNAP catalytic core consists of 2 alpha, 1 beta, 1 beta' and 1 omega subunit. When a sigma factor is associated with the core the holoenzyme is formed, which can initiate transcription. The cofactor is Mg(2+). It depends on Zn(2+) as a cofactor.

It catalyses the reaction RNA(n) + a ribonucleoside 5'-triphosphate = RNA(n+1) + diphosphate. Its function is as follows. DNA-dependent RNA polymerase catalyzes the transcription of DNA into RNA using the four ribonucleoside triphosphates as substrates. The polypeptide is DNA-directed RNA polymerase subunit beta' (Shewanella piezotolerans (strain WP3 / JCM 13877)).